The primary structure comprises 465 residues: UDP-N-acetylmuramate--L-alanine ligase (465 aa).

Residue 112-118 (GTHGKTT) participates in ATP binding.

This sequence belongs to the MurCDEF family.

The protein resides in the cytoplasm. The enzyme catalyses UDP-N-acetyl-alpha-D-muramate + L-alanine + ATP = UDP-N-acetyl-alpha-D-muramoyl-L-alanine + ADP + phosphate + H(+). It participates in cell wall biogenesis; peptidoglycan biosynthesis. Cell wall formation. In Burkholderia mallei (strain NCTC 10247), this protein is UDP-N-acetylmuramate--L-alanine ligase.